Consider the following 132-residue polypeptide: Small ribosomal subunit protein uS8 (132 aa).

Belongs to the universal ribosomal protein uS8 family. In terms of assembly, part of the 30S ribosomal subunit. Contacts proteins S5 and S12.

One of the primary rRNA binding proteins, it binds directly to 16S rRNA central domain where it helps coordinate assembly of the platform of the 30S subunit. The protein is Small ribosomal subunit protein uS8 of Borreliella burgdorferi (strain ZS7) (Borrelia burgdorferi).